The chain runs to 118 residues: Ribonuclease P protein component (118 aa).

Belongs to the RnpA family. In terms of assembly, consists of a catalytic RNA component (M1 or rnpB) and a protein subunit.

The catalysed reaction is Endonucleolytic cleavage of RNA, removing 5'-extranucleotides from tRNA precursor.. RNaseP catalyzes the removal of the 5'-leader sequence from pre-tRNA to produce the mature 5'-terminus. It can also cleave other RNA substrates such as 4.5S RNA. The protein component plays an auxiliary but essential role in vivo by binding to the 5'-leader sequence and broadening the substrate specificity of the ribozyme. This is Ribonuclease P protein component from Shewanella denitrificans (strain OS217 / ATCC BAA-1090 / DSM 15013).